The primary structure comprises 1300 residues: uncharacterized protein (1300 aa).

The interval 1–1205 is disordered; it reads MVLLRSGLGT…GKTLGLDPLY (1205 aa). Residues 51 to 69 show a composition bias toward basic residues; the sequence is GRKRKKGPKKSGGKKKKRK. Over residues 73-143 the composition is skewed to gly residues; it reads EGPGGGEGPG…GPGGGEGPGG (71 aa). Over residues 145-165 the composition is skewed to basic residues; it reads SRKRKRGDGSKKHGGKKKKKT. Residues 237-246 show a composition bias toward low complexity; sequence PDGPGAQEGP. Over residues 250 to 270 the composition is skewed to acidic residues; sequence EGPEGDEGPEGPEGPEGEGPE. A compositionally biased stretch (low complexity) spans 280 to 289; it reads PDGPGAQEGP. 2 stretches are compositionally biased toward acidic residues: residues 295 to 343 and 357 to 417; these read PDED…DSPD and PDED…EGDS. Residues 418 to 427 show a composition bias toward low complexity; sequence PDGPGAQEGP. 4 stretches are compositionally biased toward acidic residues: residues 431-469, 477-494, 517-558, and 581-630; these read EGPE…PEGE, PEGE…EGPE, EGPE…EGPE, and EGPE…EGDS. Gly residues predominate over residues 674–686; it reads SGPGSSEGEGPSG. Acidic residues-rich tracts occupy residues 713-726, 736-749, 759-772, and 820-883; these read PDED…DGTE, PDED…EGTE, and SDDE…EEEV. A compositionally biased stretch (basic and acidic residues) spans 903–917; sequence GEEKGEGEKGKGREE. Gly residues-rich tracts occupy residues 922-1010 and 1021-1031; these read GGEG…GEGG and GGEGGEGGEGG. Over residues 1183–1195 the composition is skewed to basic residues; sequence RPPKHHPQTKRAQ.

This is an uncharacterized protein from Connochaetes taurinus (Blue wildebeest).